Here is a 165-residue protein sequence, read N- to C-terminus: Ribosome maturation factor RimM (165 aa).

Positions E89–W161 constitute a PRC barrel domain.

It belongs to the RimM family. In terms of assembly, binds ribosomal protein uS19.

The protein resides in the cytoplasm. An accessory protein needed during the final step in the assembly of 30S ribosomal subunit, possibly for assembly of the head region. Essential for efficient processing of 16S rRNA. May be needed both before and after RbfA during the maturation of 16S rRNA. It has affinity for free ribosomal 30S subunits but not for 70S ribosomes. The polypeptide is Ribosome maturation factor RimM (Clostridium botulinum (strain Eklund 17B / Type B)).